The chain runs to 450 residues: Plasmepsin VII (450 aa).

Positions M1–L24 are cleaved as a signal peptide. The region spanning Y92–V441 is the Peptidase A1 domain. Catalysis depends on residues D111 and D324.

This sequence belongs to the peptidase A1 family.

Its subcellular location is the cytoplasm. This Plasmodium falciparum (isolate NF54) protein is Plasmepsin VII.